We begin with the raw amino-acid sequence, 191 residues long: Prostaglandin-H2 D-isomerase (191 aa).

An N-terminal signal peptide occupies residues 1-24; it reads MGALCTLWLGLVLLGVLGALQTSA. At glutamine 25 the chain carries Pyrrolidone carboxylic acid. N-linked (GlcNAc...) asparagine glycosylation occurs at asparagine 51. The active-site Nucleophile is cysteine 65. Residue asparagine 78 is glycosylated (N-linked (GlcNAc...) asparagine). Cysteines 89 and 186 form a disulfide.

This sequence belongs to the calycin superfamily. Lipocalin family. As to quaternary structure, monomer. Post-translationally, N- and O-glycosylated. Both N-glycosylation recognition sites are almost quantitatively occupied by N-glycans of the biantennary complex type, with a considerable proportion of structures bearing a bisecting GlcNAc. N-glycan at Asn-78: dHex1Hex5HexNAc4. Agalacto structure as well as sialylated and nonsialylated oligosaccharides bearing alpha2-3- and/or alpha2-6-linked NeuNAc are present.

Its subcellular location is the rough endoplasmic reticulum. The protein resides in the nucleus membrane. The protein localises to the golgi apparatus. It localises to the cytoplasm. It is found in the perinuclear region. Its subcellular location is the secreted. The catalysed reaction is prostaglandin H2 = prostaglandin D2. Its function is as follows. Catalyzes the conversion of PGH2 to PGD2, a prostaglandin involved in smooth muscle contraction/relaxation and a potent inhibitor of platelet aggregation. Involved in a variety of CNS functions, such as sedation, NREM sleep and PGE2-induced allodynia, and may have an anti-apoptotic role in oligodendrocytes. Binds small non-substrate lipophilic molecules, including biliverdin, bilirubin, retinal, retinoic acid and thyroid hormone, and may act as a scavenger for harmful hydrophobic molecules and as a secretory retinoid and thyroid hormone transporter. Possibly involved in development and maintenance of the blood-brain, blood-retina, blood-aqueous humor and blood-testis barrier. It is likely to play important roles in both maturation and maintenance of the central nervous system and male reproductive system. Involved in PLA2G3-dependent maturation of mast cells. PLA2G3 is secreted by immature mast cells and acts on nearby fibroblasts upstream to PTDGS to synthesize PGD2, which in turn promotes mast cell maturation and degranulation via PTGDR. This chain is Prostaglandin-H2 D-isomerase (PTGDS), found in Canis lupus familiaris (Dog).